The sequence spans 117 residues: Large ribosomal subunit protein bL20 (117 aa).

This sequence belongs to the bacterial ribosomal protein bL20 family.

Its function is as follows. Binds directly to 23S ribosomal RNA and is necessary for the in vitro assembly process of the 50S ribosomal subunit. It is not involved in the protein synthesizing functions of that subunit. In Mycoplasma mobile (strain ATCC 43663 / 163K / NCTC 11711) (Mesomycoplasma mobile), this protein is Large ribosomal subunit protein bL20.